We begin with the raw amino-acid sequence, 452 residues long: Tripartite motif-containing protein 51 (452 aa).

The RING-type zinc finger occupies 15–56 (CPICMNYFLDPVTIDCGHSFCRPCLYLNWQDTAVLAQCSECK). The segment at 88-129 (SEEQICGMHRETKKMFCEVDKSLLCLPCSNSQEHRNHIHCPI) adopts a B box-type zinc-finger fold. 4 residues coordinate Zn(2+): Cys-93, His-96, Cys-115, and His-121. The region spanning 269 to 452 (ELSAGPITGL…LRPIFCCSHF (184 aa)) is the B30.2/SPRY domain.

It belongs to the TRIM/RBCC family.

The polypeptide is Tripartite motif-containing protein 51 (TRIM51) (Homo sapiens (Human)).